We begin with the raw amino-acid sequence, 359 residues long: Aminomethyltransferase (359 aa).

The protein belongs to the GcvT family. As to quaternary structure, the glycine cleavage system is composed of four proteins: P, T, L and H.

The enzyme catalyses N(6)-[(R)-S(8)-aminomethyldihydrolipoyl]-L-lysyl-[protein] + (6S)-5,6,7,8-tetrahydrofolate = N(6)-[(R)-dihydrolipoyl]-L-lysyl-[protein] + (6R)-5,10-methylene-5,6,7,8-tetrahydrofolate + NH4(+). Functionally, the glycine cleavage system catalyzes the degradation of glycine. The protein is Aminomethyltransferase of Synechococcus sp. (strain RCC307).